Reading from the N-terminus, the 559-residue chain is Dihydroxy-acid dehydratase (559 aa).

Aspartate 81 serves as a coordination point for Mg(2+). Cysteine 122 lines the [2Fe-2S] cluster pocket. Residues aspartate 123 and lysine 124 each coordinate Mg(2+). Lysine 124 carries the post-translational modification N6-carboxylysine. Cysteine 195 is a binding site for [2Fe-2S] cluster. Glutamate 448 provides a ligand contact to Mg(2+). Serine 474 acts as the Proton acceptor in catalysis.

The protein belongs to the IlvD/Edd family. Homodimer. Requires [2Fe-2S] cluster as cofactor. Mg(2+) serves as cofactor.

It catalyses the reaction (2R)-2,3-dihydroxy-3-methylbutanoate = 3-methyl-2-oxobutanoate + H2O. The catalysed reaction is (2R,3R)-2,3-dihydroxy-3-methylpentanoate = (S)-3-methyl-2-oxopentanoate + H2O. Its pathway is amino-acid biosynthesis; L-isoleucine biosynthesis; L-isoleucine from 2-oxobutanoate: step 3/4. The protein operates within amino-acid biosynthesis; L-valine biosynthesis; L-valine from pyruvate: step 3/4. Functions in the biosynthesis of branched-chain amino acids. Catalyzes the dehydration of (2R,3R)-2,3-dihydroxy-3-methylpentanoate (2,3-dihydroxy-3-methylvalerate) into 2-oxo-3-methylpentanoate (2-oxo-3-methylvalerate) and of (2R)-2,3-dihydroxy-3-methylbutanoate (2,3-dihydroxyisovalerate) into 2-oxo-3-methylbutanoate (2-oxoisovalerate), the penultimate precursor to L-isoleucine and L-valine, respectively. The chain is Dihydroxy-acid dehydratase from Geobacillus kaustophilus (strain HTA426).